Here is a 628-residue protein sequence, read N- to C-terminus: LRR receptor kinase SERK2 (628 aa).

Residues 1–31 form the signal peptide; the sequence is MAEARLLRRRRLCLAVPFVWVVAVAVSRVGA. LRR repeat units lie at residues 97–121, 123–144, 145–169, and 170–194; these read LKNL…LGNL, NLVS…TLGQ, LYKL…LTNI, and TTLQ…SFSL. N-linked (GlcNAc...) asparagine glycans are attached at residues N109, N120, N133, N155, N168, and N181. Residues 243 to 263 form a helical membrane-spanning segment; sequence AIAGGVAAAAALLFAVPAIGF. T303 is subject to Phosphothreonine. Residues 306–593 enclose the Protein kinase domain; sequence FSNKNILGRG…GLAERWEEWQ (288 aa). Residue 312–320 participates in ATP binding; the sequence is LGRGGFGKV. S329 carries the phosphoserine modification. K334 lines the ATP pocket. Phosphothreonine is present on T350. Residues S356 and S387 each carry the phosphoserine modification. D433 functions as the Proton acceptor in the catalytic mechanism. Residues T463, T466, and T472 each carry the phosphothreonine modification. A Phosphoserine modification is found at S615. T616 carries the post-translational modification Phosphothreonine. S625 is subject to Phosphoserine.

The protein belongs to the protein kinase superfamily. Ser/Thr protein kinase family. As to quaternary structure, interacts with BRI1. Interacts with XA21, XA26/XA3 and FLS2. Post-translationally, autophosphorylated on serine and threonine residues. As to expression, expressed in flag leaves. Expressed in roots, shoot apex, leaf blades, leaf sheaths, panicles and flowers. Expressed leaves, stems, sheaths and flowers.

Its subcellular location is the cell membrane. The enzyme catalyses L-seryl-[protein] + ATP = O-phospho-L-seryl-[protein] + ADP + H(+). It carries out the reaction L-threonyl-[protein] + ATP = O-phospho-L-threonyl-[protein] + ADP + H(+). Its function is as follows. LRR receptor kinase involved in positive regulation of somatic embryogenesis and defense response against the rice blast fungus pathogen Magnaporthe oryzae. Involved in the positive regulation of receptor kinase-mediated immunity. Required for immunity mediated by the LRR receptor kinases XA21 and XA26/XA3 which recognize effectors from the bacterial pathogen Xanthomonas oryzae pv. oryzae (Xoo). Required for the immune response mediated by the LRR receptor kinase FLS2 which recognizes specifically the bacterial flagellin (flg22) effector. Kinase activity and direct interaction with the immune receptors is critical for their function. Involved in the regulation of plant growth through the brassinosteroid (BR) signaling pathway. This chain is LRR receptor kinase SERK2, found in Oryza sativa subsp. japonica (Rice).